We begin with the raw amino-acid sequence, 815 residues long: Leucine--tRNA ligase (815 aa).

The 'HIGH' region motif lies at 42-52; sequence PYPSGRLHMGH. The 'KMSKS' region signature appears at 571–575; sequence KMSKS. K574 is an ATP binding site.

The protein belongs to the class-I aminoacyl-tRNA synthetase family.

Its subcellular location is the cytoplasm. The enzyme catalyses tRNA(Leu) + L-leucine + ATP = L-leucyl-tRNA(Leu) + AMP + diphosphate. In Vesicomyosocius okutanii subsp. Calyptogena okutanii (strain HA), this protein is Leucine--tRNA ligase.